A 592-amino-acid chain; its full sequence is Aspartate--tRNA ligase (592 aa).

Glu173 serves as a coordination point for L-aspartate. Residues 197 to 200 (QLFK) are aspartate. L-aspartate is bound at residue Arg219. Residues 219–221 (RDE) and Gln228 contribute to the ATP site. His448 contributes to the L-aspartate binding site. An ATP-binding site is contributed by Glu482. Residue Arg489 participates in L-aspartate binding. ATP is bound at residue 534 to 537 (GLDR).

Belongs to the class-II aminoacyl-tRNA synthetase family. Type 1 subfamily. As to quaternary structure, homodimer.

The protein localises to the cytoplasm. The catalysed reaction is tRNA(Asp) + L-aspartate + ATP = L-aspartyl-tRNA(Asp) + AMP + diphosphate. In terms of biological role, catalyzes the attachment of L-aspartate to tRNA(Asp) in a two-step reaction: L-aspartate is first activated by ATP to form Asp-AMP and then transferred to the acceptor end of tRNA(Asp). This Shewanella baltica (strain OS223) protein is Aspartate--tRNA ligase.